We begin with the raw amino-acid sequence, 302 residues long: HTH-type transcriptional regulator AlsR (302 aa).

An HTH lysR-type domain is found at Met-1 to Thr-58. Positions Phe-18 to Lys-37 form a DNA-binding region, H-T-H motif.

This sequence belongs to the LysR transcriptional regulatory family.

Its function is as follows. Regulates the expression of the alsSD operon for acetoin biosynthesis. This chain is HTH-type transcriptional regulator AlsR (alsR), found in Bacillus subtilis (strain 168).